We begin with the raw amino-acid sequence, 281 residues long: Protein NipSnap homolog 2 (281 aa).

The N-terminal 27 residues, 1 to 27, are a transit peptide targeting the mitochondrion; that stretch reads MAARVLLARGGLLRPAAQSAFLPGLRT.

The protein belongs to the NipSnap family. In terms of assembly, interacts with CALCOCO2/NDP52, NBR1, SQSTM1/p62, TAX1BP1 and WDFY3/ALFY. Interacts with ATG8 family proteins (MAP1LC3A, MAP1LC3B, MAP1LC3C, GABARAP, GABARAPL1 and GABARAPL2). Interacts with VDAC1.

Its subcellular location is the mitochondrion matrix. It localises to the cytoplasm. Functionally, protein involved in mitophagy by facilitating recruitment of the autophagy machinery required for clearance of damaged mitochondria. Accumulates on the mitochondria surface in response to mitochondrial depolarization and acts as a 'eat me' signal by recruiting proteins involved in selective autophagy, such as autophagy receptors (CALCOCO2/NDP52, NBR1, SQSTM1/p62, TAX1BP1 and WDFY3/ALFY) and ATG8 family proteins (MAP1LC3A, MAP1LC3B, MAP1LC3C, GABARAP, GABARAPL1 and GABARAPL2). May act as a positive regulator of L-type calcium channels. This chain is Protein NipSnap homolog 2, found in Mus musculus (Mouse).